Reading from the N-terminus, the 207-residue chain is Thymidylate kinase (207 aa).

Glycine 7–serine 14 is a binding site for ATP.

Belongs to the thymidylate kinase family.

It carries out the reaction dTMP + ATP = dTDP + ADP. Its function is as follows. Phosphorylation of dTMP to form dTDP in both de novo and salvage pathways of dTTP synthesis. The sequence is that of Thymidylate kinase from Chlamydia caviae (strain ATCC VR-813 / DSM 19441 / 03DC25 / GPIC) (Chlamydophila caviae).